Here is a 162-residue protein sequence, read N- to C-terminus: UPF0305 protein MmarC6_0221 (162 aa).

This sequence belongs to the UPF0305 family.

The protein is UPF0305 protein MmarC6_0221 of Methanococcus maripaludis (strain C6 / ATCC BAA-1332).